The chain runs to 177 residues: ATP synthase subunit delta (177 aa).

The protein belongs to the ATPase delta chain family. In terms of assembly, F-type ATPases have 2 components, F(1) - the catalytic core - and F(0) - the membrane proton channel. F(1) has five subunits: alpha(3), beta(3), gamma(1), delta(1), epsilon(1). F(0) has three main subunits: a(1), b(2) and c(10-14). The alpha and beta chains form an alternating ring which encloses part of the gamma chain. F(1) is attached to F(0) by a central stalk formed by the gamma and epsilon chains, while a peripheral stalk is formed by the delta and b chains.

Its subcellular location is the cell inner membrane. Functionally, f(1)F(0) ATP synthase produces ATP from ADP in the presence of a proton or sodium gradient. F-type ATPases consist of two structural domains, F(1) containing the extramembraneous catalytic core and F(0) containing the membrane proton channel, linked together by a central stalk and a peripheral stalk. During catalysis, ATP synthesis in the catalytic domain of F(1) is coupled via a rotary mechanism of the central stalk subunits to proton translocation. This protein is part of the stalk that links CF(0) to CF(1). It either transmits conformational changes from CF(0) to CF(1) or is implicated in proton conduction. The protein is ATP synthase subunit delta of Idiomarina loihiensis (strain ATCC BAA-735 / DSM 15497 / L2-TR).